The sequence spans 617 residues: DNA mismatch repair protein MutL (617 aa).

Belongs to the DNA mismatch repair MutL/HexB family.

This protein is involved in the repair of mismatches in DNA. It is required for dam-dependent methyl-directed DNA mismatch repair. May act as a 'molecular matchmaker', a protein that promotes the formation of a stable complex between two or more DNA-binding proteins in an ATP-dependent manner without itself being part of a final effector complex. This chain is DNA mismatch repair protein MutL, found in Christiangramia forsetii (strain DSM 17595 / CGMCC 1.15422 / KT0803) (Gramella forsetii).